Here is a 143-residue protein sequence, read N- to C-terminus: Large ribosomal subunit protein uL11 (143 aa).

Belongs to the universal ribosomal protein uL11 family. In terms of assembly, part of the ribosomal stalk of the 50S ribosomal subunit. Interacts with L10 and the large rRNA to form the base of the stalk. L10 forms an elongated spine to which L12 dimers bind in a sequential fashion forming a multimeric L10(L12)X complex. One or more lysine residues are methylated.

Forms part of the ribosomal stalk which helps the ribosome interact with GTP-bound translation factors. The sequence is that of Large ribosomal subunit protein uL11 from Methylibium petroleiphilum (strain ATCC BAA-1232 / LMG 22953 / PM1).